We begin with the raw amino-acid sequence, 134 residues long: Kinetochore-binding protein 3 (134 aa).

It is found in the nucleus. Its subcellular location is the chromosome. The protein localises to the centromere. It localises to the kinetochore. In Caenorhabditis elegans, this protein is Kinetochore-binding protein 3 (kbp-3).